The chain runs to 368 residues: tRNA-specific 2-thiouridylase MnmA (368 aa).

Residues G11 to S18 and M37 contribute to the ATP site. The segment at N97–D99 is interaction with target base in tRNA. C102 functions as the Nucleophile in the catalytic mechanism. A disulfide bridge connects residues C102 and C199. Residue G127 participates in ATP binding. Positions K149 to Q151 are interaction with tRNA. C199 (cysteine persulfide intermediate) is an active-site residue. Residues R311–Y312 form an interaction with tRNA region.

The protein belongs to the MnmA/TRMU family. Interacts with TusE.

Its subcellular location is the cytoplasm. The catalysed reaction is S-sulfanyl-L-cysteinyl-[protein] + uridine(34) in tRNA + AH2 + ATP = 2-thiouridine(34) in tRNA + L-cysteinyl-[protein] + A + AMP + diphosphate + H(+). Its function is as follows. Catalyzes the 2-thiolation of uridine at the wobble position (U34) of tRNA(Lys), tRNA(Glu) and tRNA(Gln), leading to the formation of s(2)U34, the first step of tRNA-mnm(5)s(2)U34 synthesis. Sulfur is provided by IscS, via a sulfur-relay system. Binds ATP and its substrate tRNAs. The polypeptide is tRNA-specific 2-thiouridylase MnmA (Escherichia coli O139:H28 (strain E24377A / ETEC)).